The primary structure comprises 319 residues: Nucleotide-binding protein Mvan_2698 (319 aa).

Basic and acidic residues predominate over residues 1–12; sequence MTEQGMHQELRE. Positions 1-26 are disordered; sequence MTEQGMHQELREGAGTAGDEGGLEAA. An ATP-binding site is contributed by 43–50; that stretch reads GLSGAGRG. 94-97 lines the GTP pocket; sequence DVRS.

This sequence belongs to the RapZ-like family.

Displays ATPase and GTPase activities. This chain is Nucleotide-binding protein Mvan_2698, found in Mycolicibacterium vanbaalenii (strain DSM 7251 / JCM 13017 / BCRC 16820 / KCTC 9966 / NRRL B-24157 / PYR-1) (Mycobacterium vanbaalenii).